Reading from the N-terminus, the 874-residue chain is Leucine--tRNA ligase (874 aa).

Positions 43-53 (PYPSGRIHIGH) match the 'HIGH' region motif. The tract at residues 614-634 (LDDGSPVTVGPPEKMSKSKKN) is disordered. The 'KMSKS' region motif lies at 627–631 (KMSKS). K630 contributes to the ATP binding site.

Belongs to the class-I aminoacyl-tRNA synthetase family.

Its subcellular location is the cytoplasm. It carries out the reaction tRNA(Leu) + L-leucine + ATP = L-leucyl-tRNA(Leu) + AMP + diphosphate. This Azorhizobium caulinodans (strain ATCC 43989 / DSM 5975 / JCM 20966 / LMG 6465 / NBRC 14845 / NCIMB 13405 / ORS 571) protein is Leucine--tRNA ligase.